An 82-amino-acid chain; its full sequence is Large ribosomal subunit protein bL27 (82 aa).

A disordered region spans residues 1–21 (MAHKKGASSSRNGRDSNAKRL).

It belongs to the bacterial ribosomal protein bL27 family.

This is Large ribosomal subunit protein bL27 from Tropheryma whipplei (strain Twist) (Whipple's bacillus).